We begin with the raw amino-acid sequence, 478 residues long: Probable cytosolic Fe-S cluster assembly factor CPIJ010948 (478 aa).

[4Fe-4S] cluster-binding residues include C23, C69, C72, C75, C189, C245, C396, and C400.

Belongs to the NARF family.

Functionally, component of the cytosolic iron-sulfur (Fe/S) protein assembly machinery. Required for maturation of extramitochondrial Fe/S proteins. In Culex quinquefasciatus (Southern house mosquito), this protein is Probable cytosolic Fe-S cluster assembly factor CPIJ010948.